An 872-amino-acid polypeptide reads, in one-letter code: MDSRYNPAILEEKWQKTWVELGLDKTQTQSNKPKFYALSMFPYPSGSLHMGHVRNYTITDVIARLKRMQGYRVLHPMGWDAFGLPAENAAIDRGVPPANWTYQNITQMRQQLQRLGLSIDWDSEVATCSPDYYKWTQWIFLQFLQAGLAYQKEAAVNWDPIDQTVLANEQVDNEGRSWRSGAIVERKLLRQWFLKITDYAEELLNDLDKLTGWPERVKLMQANWIGKSVGAYLEFPIVGSTEKIAVYTTRPDTVYGVSYVVLAPEHPLTKQVTSKTQQAVVDTFIQEVTNQSELERTAEDKPKRGVATGGKAINPFTGEEVPIWIADYVLYEYGTGAVMGVPAHDVRDFKFAQRYDLPIDFVIAAPDDVAGFDLSPTSETEEVTQVVQIEYNQAYTEPGILINSGAFTGMTSTDAKQAIVKYATEKGFGKERIQYRLRDWLISRQRYWGAPIPVIHCPNCGIVPVPDKDLPVILPEEVEFTGRGGSPLAQLESWVNVPCPTCGSPAKRETDTMDTFIDSSWYFLRFTDARNEAQVFESAKTNDWMPVDQYVGGIEHAILHLLYSRFFTKVLRDRGLLNFDEPFERLLTQGMVQGLTYFNPNKGGKDKWVPSHLVNPNDPRDPQTGEPLQRLYATMSKSKGNGVAPEDVIAKYGVDTARMFILFKAPPEKDLEWDEADVEGQFRFLNRVWRLVTDYVASGVNPKNKSGELSKSEKDLRRAIHSAIQSVTEDLEDEYQFNTAISELMKLSNALTDANGKDSRVYAEGIHTLVVLLAPFAPHIAEELWQLLGNSESVHTQTWPAFDPAALVADEITLVIQVNGKKRADIQVPSQADKAELEKYARESEVVQRHLEGKEIKKVIVVPGKLVNFVVG.

Residues 42–52 (PYPSGSLHMGH) carry the 'HIGH' region motif. The 'KMSKS' region motif lies at 634–638 (TMSKS). K637 is a binding site for ATP.

It belongs to the class-I aminoacyl-tRNA synthetase family.

The protein resides in the cytoplasm. The catalysed reaction is tRNA(Leu) + L-leucine + ATP = L-leucyl-tRNA(Leu) + AMP + diphosphate. The chain is Leucine--tRNA ligase from Trichormus variabilis (strain ATCC 29413 / PCC 7937) (Anabaena variabilis).